A 214-amino-acid polypeptide reads, in one-letter code: Pyridoxine/pyridoxamine 5'-phosphate oxidase (214 aa).

Residues 8-11 (RINY) and lysine 66 contribute to the substrate site. FMN contacts are provided by residues 61–66 (RIVLIK), 76–77 (FT), arginine 82, lysine 83, and glutamine 105. Residues tyrosine 123, arginine 127, and serine 131 each contribute to the substrate site. Residues 140 to 141 (QS) and tryptophan 184 contribute to the FMN site. 190–192 (RLH) serves as a coordination point for substrate. Arginine 194 is a binding site for FMN.

The protein belongs to the pyridoxamine 5'-phosphate oxidase family. In terms of assembly, homodimer. Requires FMN as cofactor.

It catalyses the reaction pyridoxamine 5'-phosphate + O2 + H2O = pyridoxal 5'-phosphate + H2O2 + NH4(+). The enzyme catalyses pyridoxine 5'-phosphate + O2 = pyridoxal 5'-phosphate + H2O2. Its pathway is cofactor metabolism; pyridoxal 5'-phosphate salvage; pyridoxal 5'-phosphate from pyridoxamine 5'-phosphate: step 1/1. It functions in the pathway cofactor metabolism; pyridoxal 5'-phosphate salvage; pyridoxal 5'-phosphate from pyridoxine 5'-phosphate: step 1/1. Catalyzes the oxidation of either pyridoxine 5'-phosphate (PNP) or pyridoxamine 5'-phosphate (PMP) into pyridoxal 5'-phosphate (PLP). The polypeptide is Pyridoxine/pyridoxamine 5'-phosphate oxidase (Burkholderia ambifaria (strain ATCC BAA-244 / DSM 16087 / CCUG 44356 / LMG 19182 / AMMD) (Burkholderia cepacia (strain AMMD))).